The primary structure comprises 327 residues: 4-hydroxy-2-oxoglutarate aldolase, mitochondrial (327 aa).

Residues 1 to 25 (MLVPRVWSSVRLGLSRVLSRTLRGW) constitute a mitochondrion transit peptide. 77–78 (SN) lines the substrate pocket. The Schiff-base intermediate with substrate role is filled by K196. The substrate site is built by S198 and G222.

This sequence belongs to the DapA family. In terms of assembly, homotetramer.

The protein localises to the mitochondrion. The catalysed reaction is (4S)-4-hydroxy-2-oxoglutarate = glyoxylate + pyruvate. The enzyme catalyses (4R)-4-hydroxy-2-oxoglutarate = glyoxylate + pyruvate. Inhibited by divalent cations. In terms of biological role, catalyzes the final step in the metabolic pathway of hydroxyproline. The protein is 4-hydroxy-2-oxoglutarate aldolase, mitochondrial (HOGA1) of Bos taurus (Bovine).